The sequence spans 641 residues: Macrolide export ATP-binding/permease protein MacB (641 aa).

The region spanning 2-236 (IFLKNICKNI…LTLKTMSKEK (235 aa)) is the ABC transporter domain. 34-41 (GQSGSGKT) is an ATP binding site. The next 4 helical transmembrane spans lie at 265–285 (ILTM…VALG), 519–539 (ACVA…IMLV), 571–591 (MICT…IFAF), and 604–624 (AYSV…FGFF).

Belongs to the ABC transporter superfamily. Macrolide exporter (TC 3.A.1.122) family. As to quaternary structure, homodimer.

Its subcellular location is the cell inner membrane. Functionally, non-canonical ABC transporter that contains transmembrane domains (TMD), which form a pore in the inner membrane, and an ATP-binding domain (NBD), which is responsible for energy generation. Confers resistance against macrolides. This is Macrolide export ATP-binding/permease protein MacB from Campylobacter jejuni subsp. jejuni serotype O:23/36 (strain 81-176).